A 516-amino-acid chain; its full sequence is D-aminopeptidase (516 aa).

Serine 61 (nucleophile) is an active-site residue. The active-site Proton donor/acceptor is the lysine 64. Residues 476–486 (RRSMDAPAPGD) are important for specificity. Aspartate 480 contacts substrate.

The protein belongs to the peptidase S12 family. In terms of assembly, homodimer.

It catalyses the reaction Release of an N-terminal D-amino acid from a peptide, Xaa-|-Yaa-, in which Xaa is preferably D-Ala, D-Ser or D-Thr. D-amino acid amides and methyl esters also are hydrolyzed, as is glycine amide.. Its activity is regulated as follows. Inhibited by beta-lactam compounds such as 6-aminopenicillic acid, 7-aminocephalosporanic acid, benzylpenicillin and ampicillin. Inhibited by p-chloromercuribenzoate. Hydrolyzes N-terminal residues in D-amino acid-containing peptides. The chain is D-aminopeptidase from Cereibacter sphaeroides (strain ATCC 17029 / ATH 2.4.9) (Rhodobacter sphaeroides).